The following is a 264-amino-acid chain: Teichoic acids export ATP-binding protein TagH (264 aa).

Residues Ile24–Lys243 form the ABC transporter domain. Residue Gly57 to Ser64 participates in ATP binding.

This sequence belongs to the ABC transporter superfamily. Teichoic acids exporter (TC 3.A.1.104.1) family. As to quaternary structure, the complex is composed of two ATP-binding proteins (TagH) and two transmembrane proteins (TagG).

The protein resides in the cell membrane. It carries out the reaction ATP + H2O + teichoic acidSide 1 = ADP + phosphate + teichoic acidSide 2.. Its function is as follows. Part of the ABC transporter complex TagGH involved in teichoic acids export. Responsible for energy coupling to the transport system. The chain is Teichoic acids export ATP-binding protein TagH from Staphylococcus epidermidis (strain ATCC 35984 / DSM 28319 / BCRC 17069 / CCUG 31568 / BM 3577 / RP62A).